The chain runs to 486 residues: Zinc finger chaperone ZPR1 (486 aa).

Residues 1 to 31 (MSEQKEDLFKPVGEAAAEVEDESIAEQNKAN) are disordered. A Phosphoserine modification is found at Ser-23. 2 C4-type zinc fingers span residues 54–86 (CMNC…CPHC) and 295–327 (CPSC…CDHC). Thr-407 carries the phosphothreonine modification.

It belongs to the ZPR1 family. Interacts with elongation factor 1-alpha.

Its subcellular location is the cytoplasm. It is found in the nucleus. Acts as a protein folding chaperone for elongation factor 1-alpha. This is Zinc finger chaperone ZPR1 from Saccharomyces cerevisiae (strain ATCC 204508 / S288c) (Baker's yeast).